The following is a 306-amino-acid chain: Methionyl-tRNA formyltransferase (306 aa).

110–113 (SLLP) lines the (6S)-5,6,7,8-tetrahydrofolate pocket.

It belongs to the Fmt family.

The catalysed reaction is L-methionyl-tRNA(fMet) + (6R)-10-formyltetrahydrofolate = N-formyl-L-methionyl-tRNA(fMet) + (6S)-5,6,7,8-tetrahydrofolate + H(+). Its function is as follows. Attaches a formyl group to the free amino group of methionyl-tRNA(fMet). The formyl group appears to play a dual role in the initiator identity of N-formylmethionyl-tRNA by promoting its recognition by IF2 and preventing the misappropriation of this tRNA by the elongation apparatus. The sequence is that of Methionyl-tRNA formyltransferase from Brucella melitensis biotype 2 (strain ATCC 23457).